The following is a 223-amino-acid chain: 2-phospho-L-lactate guanylyltransferase (223 aa).

Belongs to the CofC family. In terms of assembly, homodimer.

The enzyme catalyses (2S)-2-phospholactate + GTP + H(+) = (2S)-lactyl-2-diphospho-5'-guanosine + diphosphate. The protein operates within cofactor biosynthesis; coenzyme F420 biosynthesis. Guanylyltransferase that catalyzes the activation of (2S)-2-phospholactate (2-PL) as (2S)-lactyl-2-diphospho-5'-guanosine, via the condensation of 2-PL with GTP. It is involved in the biosynthesis of coenzyme F420, a hydride carrier cofactor. The polypeptide is 2-phospho-L-lactate guanylyltransferase (Methanothermobacter thermautotrophicus (strain ATCC 29096 / DSM 1053 / JCM 10044 / NBRC 100330 / Delta H) (Methanobacterium thermoautotrophicum)).